Reading from the N-terminus, the 366-residue chain is Tripartite motif-containing protein 54 (366 aa).

The segment at 26–82 (CPICLEMFSKPVVILPCQHNLCRKCANDVFQASNPLWQSRSSTTVSSGGRFRCPSCR) adopts an RING-type zinc-finger fold. The B box-type zinc finger occupies 121–163 (EQHLMCEEHEDEKINIYCLSCEVPTCSLCKVFGAHKDCEVAPL). Residues Cys126, His129, Cys149, and His155 each contribute to the Zn(2+) site. Positions 168–211 (KRQKSELSDGIAMLVAGNDRVQAVITQMEEVCQTIEENSRRQKQ) are mediates microtubule-binding and homooligomerization. A coiled-coil region spans residues 185 to 258 (NDRVQAVITQ…LIRQYGDHLE (74 aa)). Positions 271–329 (MEEPQMALYLQQAKELINKVGTMSKVELAGRPEPGYERMDQFTVSVEHVAEMLRTIDFQ) constitute a COS domain. The tract at residues 326 to 366 (IDFQPGTSGEEEDEEVAVEGEEGNAGPEEERTDGRESTGQH) is disordered. Over residues 334–347 (GEEEDEEVAVEGEE) the composition is skewed to acidic residues. A compositionally biased stretch (basic and acidic residues) spans 353-366 (EEERTDGRESTGQH).

Homooligomer and heterooligomer. Interacts with TRIM63 and probably with TRIM55. Interacts with tubulin.

It localises to the cytoplasm. The protein resides in the cytoskeleton. The protein localises to the myofibril. Its subcellular location is the sarcomere. It is found in the z line. Functionally, may bind and stabilize microtubules during myotubes formation. The polypeptide is Tripartite motif-containing protein 54 (TRIM54) (Bos taurus (Bovine)).